The chain runs to 106 residues: Ig kappa chain C region, B allele (106 aa).

The Ig-like domain maps to 5 to 102 (PTVSIFPPST…SSSPVVKSFN (98 aa)). Cys26 and Cys86 are oxidised to a cystine.

The sequence is that of Ig kappa chain C region, B allele from Rattus norvegicus (Rat).